Consider the following 942-residue polypeptide: Zinc finger protein 865 (942 aa).

Residues 66-106 (FASTSTSKPKEFKVEAPPSSSLSPSKKPDIATTQQFNNQPP) are disordered. The segment covering 96–106 (ATTQQFNNQPP) has biased composition (polar residues). 20 C2H2-type zinc fingers span residues 172–194 (FPCT…MLVH), 200–222 (YECN…RRCH), 282–304 (FTCT…QIIH), 310–332 (FSCS…VKTH), 338–360 (VQCE…QATH), 367–389 (YKCE…KQVH), 466–488 (FCCN…ERIH), 494–516 (HQCS…HVVH), 522–544 (YKCE…KQIH), 564–586 (FGCT…KELH), 592–614 (YVCD…KLVH), 678–700 (FSCS…KYVH), 706–728 (LACN…RRTH), 734–756 (FTCS…QRCH), 762–784 (YRCT…KVVH), 790–812 (YKCA…QRLH), 818–840 (QRCP…QRVH), 846–868 (YRCD…QRSH), 874–896 (LRCS…VQTH), and 902–924 (FKCG…RHAH).

The protein belongs to the krueppel C2H2-type zinc-finger protein family.

The protein resides in the nucleus. In terms of biological role, may be involved in transcriptional regulation. This is Zinc finger protein 865 (znf865) from Xenopus tropicalis (Western clawed frog).